Consider the following 239-residue polypeptide: Lytic polysaccharide monooxygenase-like protein X325 (239 aa).

The signal sequence occupies residues 1-24 (MVLPSSVSQWAALIALLCAGLANA). His25 provides a ligand contact to Cu(2+). Asn41, Asn56, Asn79, Asn117, Asn150, and Asn197 each carry an N-linked (GlcNAc...) asparagine glycan. Disulfide bonds link Cys71-Cys176 and Cys141-Cys195. Ser214 carries GPI-anchor amidated serine lipidation. Residues 215 to 239 (AAAPKSSLMSVLPVYMVALLSWAMM) constitute a propeptide, removed in mature form.

It belongs to the X325 family. Requires Cu(2+) as cofactor.

The protein resides in the cell membrane. Lytic polysaccharide monooxygenase-like protein that has diverged to biological functions other than polysaccharide degradation since it does not perform oxidative cleavage of polysaccharides. Acts as a cell surface-bound protein that functions in the copper-accumulation pathway. May also act as the major cell wall sensor that regulates MAP kinase-dependent hyphal anastomosis, the fusion of hyphal cells. In Aspergillus fumigatus (strain ATCC MYA-4609 / CBS 101355 / FGSC A1100 / Af293) (Neosartorya fumigata), this protein is Lytic polysaccharide monooxygenase-like protein X325.